A 484-amino-acid polypeptide reads, in one-letter code: Alginate production protein AlgE (484 aa).

Residues 1 to 25 form the signal peptide; the sequence is MSRKQRISAGLGLGASLLCCNPLFA. A compositionally biased stretch (acidic residues) spans 93-103; that stretch reads TDPTDPNEEPG. A disordered region spans residues 93–118; the sequence is TDPTDPNEEPGGDPANGFSRDSSRDP.

This sequence belongs to the AlgE family.

It is found in the cell outer membrane. The protein operates within glycan biosynthesis; alginate biosynthesis. Its function is as follows. Has non-porin-like, channel-forming properties and probably functions as an alginate permeability pore. The protein is Alginate production protein AlgE (algE) of Azotobacter vinelandii.